Reading from the N-terminus, the 571-residue chain is Adenine deaminase (571 aa).

Belongs to the metallo-dependent hydrolases superfamily. Adenine deaminase family. The cofactor is Mn(2+).

The catalysed reaction is adenine + H2O + H(+) = hypoxanthine + NH4(+). This Dehalococcoides mccartyi (strain CBDB1) protein is Adenine deaminase.